Here is a 148-residue protein sequence, read N- to C-terminus: Ferredoxin-thioredoxin reductase catalytic chain, chloroplastic (148 aa).

The transit peptide at 1-35 (MKALQASTSYSFFSKSSSATLQRRTHRPQCVILSK) directs the protein to the chloroplast. Cys87 lines the [4Fe-4S] cluster pocket. Cys89 acts as the Nucleophile in catalysis. Cysteines 89 and 119 form a disulfide. Residues Cys106, Cys108, and Cys117 each coordinate [4Fe-4S] cluster.

Belongs to the ferredoxin thioredoxin reductase beta subunit family. In terms of assembly, heterodimer of subunit A (variable subunit) and subunit B (catalytic subunit). Heterodimeric FTR forms a complex with ferredoxin and thioredoxin. The cofactor is [4Fe-4S] cluster.

It is found in the plastid. The protein localises to the chloroplast. It catalyses the reaction [thioredoxin]-disulfide + 2 reduced [2Fe-2S]-[ferredoxin] + 2 H(+) = [thioredoxin]-dithiol + 2 oxidized [2Fe-2S]-[ferredoxin]. In terms of biological role, catalytic subunit of the ferredoxin-thioredoxin reductase (FTR), which catalyzes the two-electron reduction of thioredoxins by the electrons provided by reduced ferredoxin. In Spinacia oleracea (Spinach), this protein is Ferredoxin-thioredoxin reductase catalytic chain, chloroplastic.